The primary structure comprises 109 residues: Aquaporin-2 (109 aa).

Topologically, residues 1 to 6 (SIAFSR) are cytoplasmic. The chain crosses the membrane as a helical span at residues 7–27 (AVFTEFLATLLFVFFGLGSAL). Residues 28–35 (NWPQALPS) lie on the Extracellular side of the membrane. A helical membrane pass occupies residues 36–54 (VLQIAMAFGLAIGTLVQML). Residues 55–59 (GHISG) lie on the Cytoplasmic side of the membrane. The segment at residues 60–69 (AHINPAVTVA) is an intramembrane region (discontinuously helical). Residues 63-65 (NPA) carry the NPA 1 motif. Residues 70–80 (CLVGCHISFLR) lie on the Cytoplasmic side of the membrane. A helical membrane pass occupies residues 81 to 102 (AAFYVAAQLLGAVAGAALLHEV). Topologically, residues 103–109 (TPPSIRG) are extracellular.

This sequence belongs to the MIP/aquaporin (TC 1.A.8) family. In terms of assembly, homotetramer. Serine phosphorylation is necessary and sufficient for expression at the apical membrane. Endocytosis is not phosphorylation-dependent. Post-translationally, N-glycosylated.

The protein localises to the apical cell membrane. It localises to the basolateral cell membrane. Its subcellular location is the cell membrane. It is found in the cytoplasmic vesicle membrane. The protein resides in the golgi apparatus. The protein localises to the trans-Golgi network membrane. It carries out the reaction H2O(in) = H2O(out). The catalysed reaction is glycerol(in) = glycerol(out). Its function is as follows. Forms a water-specific channel that provides the plasma membranes of renal collecting duct with high permeability to water, thereby permitting water to move in the direction of an osmotic gradient. Plays an essential role in renal water homeostasis. Could also be permeable to glycerol. The sequence is that of Aquaporin-2 from Erinaceus europaeus (Western European hedgehog).